A 252-amino-acid polypeptide reads, in one-letter code: 5'-nucleotidase SurE (252 aa).

A divalent metal cation-binding residues include Asp-8, Asp-9, Ser-39, and Asn-91.

The protein belongs to the SurE nucleotidase family. A divalent metal cation serves as cofactor.

It localises to the cytoplasm. It carries out the reaction a ribonucleoside 5'-phosphate + H2O = a ribonucleoside + phosphate. In terms of biological role, nucleotidase that shows phosphatase activity on nucleoside 5'-monophosphates. The chain is 5'-nucleotidase SurE from Geobacter metallireducens (strain ATCC 53774 / DSM 7210 / GS-15).